The following is a 343-amino-acid chain: Uroporphyrinogen decarboxylase (343 aa).

Residues 23 to 27, D73, Y150, S205, and H322 contribute to the substrate site; that span reads RQAGR.

Belongs to the uroporphyrinogen decarboxylase family. Homodimer.

The protein resides in the cytoplasm. It carries out the reaction uroporphyrinogen III + 4 H(+) = coproporphyrinogen III + 4 CO2. The protein operates within porphyrin-containing compound metabolism; protoporphyrin-IX biosynthesis; coproporphyrinogen-III from 5-aminolevulinate: step 4/4. Catalyzes the decarboxylation of four acetate groups of uroporphyrinogen-III to yield coproporphyrinogen-III. In Cereibacter sphaeroides (strain KD131 / KCTC 12085) (Rhodobacter sphaeroides), this protein is Uroporphyrinogen decarboxylase.